The chain runs to 440 residues: Xylose isomerase (440 aa).

2 residues coordinate Mg(2+): Asp-307 and Asp-309.

This sequence belongs to the xylose isomerase family. As to quaternary structure, homotetramer. The cofactor is Mg(2+).

Its subcellular location is the cytoplasm. The enzyme catalyses alpha-D-xylose = alpha-D-xylulofuranose. This chain is Xylose isomerase, found in Escherichia coli (strain K12 / MC4100 / BW2952).